The chain runs to 533 residues: Acid-sensing ion channel 3 (533 aa).

The Cytoplasmic portion of the chain corresponds to 1–19 (MKPRSGLEEAQRRQASDIR). The chain crosses the membrane as a helical span at residues 20–40 (VFASSCTMHGLGHIFGPGGLT). A Phosphothreonine; by PKC modification is found at threonine 40. Over 41–435 (LRRGLWATAV…EQKAAYEVSE (395 aa)) the chain is Extracellular. 7 disulfide bridges follow: cysteine 93-cysteine 187, cysteine 165-cysteine 172, cysteine 283-cysteine 372, cysteine 317-cysteine 368, cysteine 321-cysteine 366, cysteine 330-cysteine 352, and cysteine 332-cysteine 344. Asparagine 176 carries N-linked (GlcNAc...) asparagine glycosylation. Residues 286–310 (ASLDPDDFDPEPSDPLGSPRPRPSP) form a disordered region. N-linked (GlcNAc...) asparagine glycosylation occurs at asparagine 400. The helical transmembrane segment at 436 to 456 (LLGDIGGQMGLFIGASLLTIL) threads the bilayer. The GAS motif; ion selectivity filter motif lies at 449–451 (GAS). Residues 457–533 (EILDYLCEVF…HRTCYLVTRL (77 aa)) are Cytoplasmic-facing. Position 523 is a phosphoserine; by PKC (serine 523). Residues 530–533 (VTRL) carry the PDZ-binding motif.

It belongs to the amiloride-sensitive sodium channel (TC 1.A.6) family. ASIC3 subfamily. As to quaternary structure, can form homotrimeric channels. Heterotrimer; forms functional heterotrimers producing channel with different properties. Forms heterotrimers with ASIC2; gives rise to a biphasic current with a sustained current which discriminates poorly between Na(+) and K(+). Interacts with STOM; inhibits ASIC3 acid-evoked current. Interacts with LIN7B (via PDZ domain); increases ASIC3 expression at the plasma membrane. Interacts with MAGI1 (via PDZ domain); probably regulates ASIC3. Interacts with GOPC (via PDZ domain); probably regulates ASIC3. Interacts with DLG4 (via PDZ domain); reduces ASIC3 expression at the plasma membrane. In terms of processing, could be phosphorylated by PKC, promoting activation of ASIC2/ASIC3 heterotrimers. In terms of tissue distribution, expressed in sciatic nerve and dorsal root ganglion (at protein level). Expressed in sensory neurons of dorsal root ganglion. Expressed in Golgi interneurons in the granular layer. Also found in superior cervical ganglia, spinal cord and brain stem.

The protein resides in the cell membrane. Its subcellular location is the cytoplasm. It carries out the reaction Na(+)(in) = Na(+)(out). It catalyses the reaction K(+)(in) = K(+)(out). The enzyme catalyses Ca(2+)(in) = Ca(2+)(out). Its activity is regulated as follows. Inhibited by the diuretic drug amiloride. Inhibited by gadolinium ions. Inhibited by extracellular Ca(2+). Activated by lactate. Salicylic acid, diclofenac and aspirin inhibit the sustained current component. Activated by the vertebrate neuropeptides NPFF and NPSF, and the related FMRFamide. Specifically and reversibly inhibited by the a sea anemone toxin APETx2. ASIC3-containing channels are potentiated by the cono-RFamide CNF-Tx1.1, and probably CNF-Tx1.2 and CNF-Tx1.3 (AC P0DL71). Its function is as follows. Forms pH-gated heterotrimeric sodium channels that act as postsynaptic excitatory receptors in the nervous system. Upon extracellular acidification, these channels generate a biphasic current with a fast inactivating and a slow sustained phase. ASIC3 is more sensitive to protons and gates between closed, open, and desensitized states faster than other ASICs. Displays high selectivity for sodium ions but can also permit the permeation of other cations. As a neuronal acid sensor, probably contributes to mechanoreception, acid nociception, and heat nociception. By forming heterotrimeric channels with ASIC2, generates a biphasic current with a fast inactivating and a slow sustained phase, which in sensory neurons is proposed to mediate the pain induced by acidosis that occurs in ischemic, damaged or inflamed tissues. The protein is Acid-sensing ion channel 3 of Rattus norvegicus (Rat).